A 662-amino-acid polypeptide reads, in one-letter code: Protein associated with UVRAG as autophagy enhancer (662 aa).

Disordered stretches follow at residues 1–34 (MVSQ…RLLN) and 58–131 (DVQQ…SLSS). The segment covering 58–71 (DVQQQPQDLQSQVP) has biased composition (low complexity). A compositionally biased stretch (polar residues) spans 100–113 (AETTLSEDTTDSVG). The span at 114–131 (SASPHGSSEKSSSFSLSS) shows a compositional bias: low complexity. Serine 157 bears the Phosphoserine; by MTOR mark. The tract at residues 196-235 (EVFVLPVDVEKENAHFYVADMIISAMEKMKCNILSQQQTE) is interaction with UVRAG. N6-acetyllysine is present on residues lysine 483, lysine 523, lysine 533, lysine 573, and lysine 633.

As to quaternary structure, interacts with UVRAG; the interaction is direct and promotes association with the PI3K/PI3KC3 and HOPS complexes. Interacts with STX17. Phosphorylated by MTOR at Ser-157 under nutrient-rich conditions. Phosphorylation prevents acetylation by KAT5/TIP60 and impairs RUBCNL/PACER function and autophagosome maturation. Under autophagy induction, Phosphorylation by MTOR is repressed, enabling acetylation by KAT5/TIP60. In terms of processing, acetylated by KAT5/TIP60 under autophagy induction, promoting autophagosome maturation and lipid metabolism. Acetylation is prevented by phosphorylation by MTOR. Lys-483 and Lys-573 constitute the key sites for tuning function in autophagy. As to expression, expressed weakly in cervical carcinoma cell lines.

The protein localises to the cytoplasmic vesicle. It localises to the autophagosome membrane. Its function is as follows. Regulator of autophagy that promotes autophagosome maturation by facilitating the biogenesis of phosphatidylinositol 3-phosphate (PtdIns(3)P) in late steps of autophagy. Acts by antagonizing RUBCN, thereby stimulating phosphatidylinositol 3-kinase activity of the PI3K/PI3KC3 complex. Following anchorage to the autophagosomal SNARE STX17, promotes the recruitment of PI3K/PI3KC3 and HOPS complexes to the autophagosome to regulate the fusion specificity of autophagosomes with late endosomes/lysosomes. Binds phosphoinositides phosphatidylinositol 3-phosphate (PtdIns(3)P), 4-phosphate (PtdIns(4)P) and 5-phosphate (PtdIns(5)P). In addition to its role in autophagy, acts as a regulator of lipid and glycogen homeostasis. May act as a tumor suppressor. The sequence is that of Protein associated with UVRAG as autophagy enhancer from Homo sapiens (Human).